Here is a 439-residue protein sequence, read N- to C-terminus: CBL-interacting serine/threonine-protein kinase 26 (439 aa).

Residues 13 to 268 (YEVGKTLGQG…IPEVLGDAWF (256 aa)) enclose the Protein kinase domain. ATP-binding positions include 19-27 (LGQGTFAKV) and Lys-42. The active-site Proton acceptor is Asp-136. The tract at residues 154 to 183 (DFGLSALSRQVRGDGLLHTACGTPNYAAPE) is activation loop. Ser-158 is subject to Phosphoserine. The residue at position 172 (Thr-172) is a Phosphothreonine. Positions 306–330 (EQPTSMNAFELISMSRALDLGNLFE) constitute an NAF domain. The segment at 336–365 (KRETRFAAKGAANDLVQKIEEASKPLGFDI) is PPI.

This sequence belongs to the protein kinase superfamily. CAMK Ser/Thr protein kinase family. SNF1 subfamily. In terms of assembly, interacts with RBOHF (via N-terminus). Mn(2+) is required as a cofactor.

The protein resides in the cell membrane. The enzyme catalyses L-seryl-[protein] + ATP = O-phospho-L-seryl-[protein] + ADP + H(+). It carries out the reaction L-threonyl-[protein] + ATP = O-phospho-L-threonyl-[protein] + ADP + H(+). In terms of biological role, CIPK serine-threonine protein kinases interact with CBL proteins. Binding of a CBL protein to the regulatory NAF domain of CIPK protein lead to the activation of the kinase in a calcium-dependent manner. Involved in the calcium-dependent regulation of reactive oxygen species production by the NADPH oxidase RBOHF. This is CBL-interacting serine/threonine-protein kinase 26 (CIPK26) from Arabidopsis thaliana (Mouse-ear cress).